The sequence spans 222 residues: 3-demethoxyubiquinol 3-hydroxylase (222 aa).

Fe cation contacts are provided by glutamate 71, glutamate 101, histidine 104, glutamate 153, glutamate 185, and histidine 188.

Belongs to the COQ7 family. Fe cation is required as a cofactor.

The protein localises to the cell membrane. It carries out the reaction a 5-methoxy-2-methyl-3-(all-trans-polyprenyl)benzene-1,4-diol + AH2 + O2 = a 3-demethylubiquinol + A + H2O. It participates in cofactor biosynthesis; ubiquinone biosynthesis. Catalyzes the hydroxylation of 2-nonaprenyl-3-methyl-6-methoxy-1,4-benzoquinol during ubiquinone biosynthesis. In Bordetella bronchiseptica (strain ATCC BAA-588 / NCTC 13252 / RB50) (Alcaligenes bronchisepticus), this protein is 3-demethoxyubiquinol 3-hydroxylase.